A 318-amino-acid chain; its full sequence is Probable mitochondrial 2-oxoglutarate/malate carrier protein (318 aa).

3 Solcar repeats span residues 22 to 111 (QSQL…IKDI), 119 to 210 (LPFT…TKQL), and 219 to 309 (DDIK…LNIL). 6 consecutive transmembrane segments (helical) span residues 28 to 48 (FVIGGLAGMLSSAFTHPIDSL), 79 to 99 (GFFTLYKGLSASLLRQATYTT), 125 to 145 (IMVGMLSGAGGAIVGTPADLT), 185 to 205 (GCSPNLIRAMFMTAGQVSSYD), 225 to 245 (LIASTTAAFVAAVATSPLDVI), and 281 to 301 (FYKGFNPYFMRLGPQTILTFI).

This sequence belongs to the mitochondrial carrier (TC 2.A.29) family.

Its subcellular location is the mitochondrion inner membrane. Mitochondrial solute carriers shuttle metabolites, nucleotides, and cofactors through the mitochondrial inner membrane. Catalyzes the transport of 2-oxoglutarate across the inner mitochondrial membrane in an electroneutral exchange for malate or other dicarboxylic acids, and plays an important role in several metabolic processes, including the malate-aspartate shuttle, the oxoglutarate/isocitrate shuttle, in gluconeogenesis from lactate, and in nitrogen metabolism. The chain is Probable mitochondrial 2-oxoglutarate/malate carrier protein (ucpC) from Dictyostelium discoideum (Social amoeba).